A 248-amino-acid chain; its full sequence is Stress-related protein (248 aa).

It belongs to the REF/SRPP family.

This is Stress-related protein (SRP) from Vitis riparia (Frost grape).